A 75-amino-acid polypeptide reads, in one-letter code: Small ribosomal subunit protein bS16 (75 aa).

This sequence belongs to the bacterial ribosomal protein bS16 family.

This is Small ribosomal subunit protein bS16 from Helicobacter pylori (strain G27).